A 181-amino-acid polypeptide reads, in one-letter code: MDLVGTVVVAVWAMLPAYVPNNAAVLAGGGRPIDGGRSLGGRRLLGDGKTWRGTAVGTAAGVALAVALNALRPAAADALGVVLPAFPPAAMGTLAFGAMVGDIAASFLKRRTGRQRGAAFPVVDQLDFVVVALALTALAVPAWVGDTFGLPVLVTVAVLTPALHLLTNGIAYALGVKDEPW.

The next 5 helical transmembrane spans lie at 7 to 27 (VVVA…AVLA), 55 to 75 (AVGT…RPAA), 80 to 100 (GVVL…GAMV), 128 to 148 (FVVV…GDTF), and 150 to 170 (LPVL…TNGI).

This sequence belongs to the CDP-archaeol synthase family. The cofactor is Mg(2+).

It localises to the cell membrane. The enzyme catalyses 2,3-bis-O-(geranylgeranyl)-sn-glycerol 1-phosphate + CTP + H(+) = CDP-2,3-bis-O-(geranylgeranyl)-sn-glycerol + diphosphate. It participates in membrane lipid metabolism; glycerophospholipid metabolism. Catalyzes the formation of CDP-2,3-bis-(O-geranylgeranyl)-sn-glycerol (CDP-archaeol) from 2,3-bis-(O-geranylgeranyl)-sn-glycerol 1-phosphate (DGGGP) and CTP. This reaction is the third ether-bond-formation step in the biosynthesis of archaeal membrane lipids. This chain is CDP-archaeol synthase, found in Halobacterium salinarum (strain ATCC 29341 / DSM 671 / R1).